A 38-amino-acid polypeptide reads, in one-letter code: Mu-agatoxin-Hc1b (38 aa).

4 cysteine pairs are disulfide-bonded: C3/C19, C10/C24, C18/C34, and C26/C32. S38 is modified (serine amide).

This sequence belongs to the neurotoxin 07 (Beta/delta-agtx) family. 02 (aga-3) subfamily. In terms of tissue distribution, expressed by the venom gland.

The protein resides in the secreted. In terms of biological role, insecticidal neurotoxin that induces irreversible neuromuscular blockade in house crickets (A.domesticus). Modifies presynaptic voltage-gated sodium channels (Nav), causing them to open at the normal resting potential of the nerve. This leads to spontaneous release of neurotransmitter and repetitive action potentials in motor neurons. The chain is Mu-agatoxin-Hc1b from Hololena curta (Funnel-web spider).